We begin with the raw amino-acid sequence, 202 residues long: Superoxide dismutase [Cu-Zn], chloroplastic (202 aa).

Residues 1–48 constitute a chloroplast transit peptide; the sequence is MASQTLVSPSPLSSHSLLRTSFSGVSVKLAPQFSTLATSNFKPLTVVA. 3 residues coordinate Cu cation: histidine 94, histidine 96, and histidine 111. An intrachain disulfide couples cysteine 105 to cysteine 194. Zn(2+)-binding residues include histidine 111, histidine 119, histidine 128, and aspartate 131. Histidine 168 provides a ligand contact to Cu cation.

The protein belongs to the Cu-Zn superoxide dismutase family. Homotetramer. It depends on Cu cation as a cofactor. Requires Zn(2+) as cofactor.

The protein localises to the plastid. The protein resides in the chloroplast. It carries out the reaction 2 superoxide + 2 H(+) = H2O2 + O2. Its function is as follows. Destroys radicals which are normally produced within the cells and which are toxic to biological systems. The chain is Superoxide dismutase [Cu-Zn], chloroplastic (SODCP) from Pisum sativum (Garden pea).